The primary structure comprises 723 residues: Malate synthase G (723 aa).

Residues Val118, 125 to 126 (RY), Ser274, and Arg311 each bind acetyl-CoA. Arg338 functions as the Proton acceptor in the catalytic mechanism. Glyoxylate-binding positions include Arg338, Glu427, and 452-455 (GFLD). Positions 427 and 455 each coordinate Mg(2+). Pro536 serves as a coordination point for acetyl-CoA. Cys617 carries the post-translational modification Cysteine sulfenic acid (-SOH). The active-site Proton donor is the Asp631. The residue at position 688 (Cys688) is a Cysteine sulfenic acid (-SOH).

This sequence belongs to the malate synthase family. GlcB subfamily. Monomer. The cofactor is Mg(2+).

Its subcellular location is the cytoplasm. It carries out the reaction glyoxylate + acetyl-CoA + H2O = (S)-malate + CoA + H(+). The protein operates within carbohydrate metabolism; glyoxylate cycle; (S)-malate from isocitrate: step 2/2. Its function is as follows. Involved in the glycolate utilization. Catalyzes the condensation and subsequent hydrolysis of acetyl-coenzyme A (acetyl-CoA) and glyoxylate to form malate and CoA. The polypeptide is Malate synthase G (Shigella flexneri).